A 213-amino-acid chain; its full sequence is Urease accessory protein UreG (213 aa).

GTP is bound at residue 12 to 19 (GPVGSGKT).

Belongs to the SIMIBI class G3E GTPase family. UreG subfamily. In terms of assembly, homodimer. UreD, UreF and UreG form a complex that acts as a GTP-hydrolysis-dependent molecular chaperone, activating the urease apoprotein by helping to assemble the nickel containing metallocenter of UreC. The UreE protein probably delivers the nickel.

The protein localises to the cytoplasm. In terms of biological role, facilitates the functional incorporation of the urease nickel metallocenter. This process requires GTP hydrolysis, probably effectuated by UreG. This Marinomonas sp. (strain MWYL1) protein is Urease accessory protein UreG.